A 658-amino-acid polypeptide reads, in one-letter code: Squalene--hopene cyclase (658 aa).

The stretch at 69 to 110 (EAKIGRYLRRIQGEHGGWSLFYGGDLDLSATVKAYFALKMIG) is one PFTB 1 repeat. Residue Asp392 is the Proton donor of the active site. PFTB repeat units follow at residues 418-459 (KARA…GALL), 486-526 (MKAA…NVAA), and 534-584 (IQKA…GLMA).

The protein belongs to the terpene cyclase/mutase family.

Its subcellular location is the cell membrane. It catalyses the reaction squalene = hop-22(29)-ene. The enzyme catalyses squalene + H2O = hopan-22-ol. Its pathway is secondary metabolite biosynthesis; hopanoid biosynthesis. Functionally, catalyzes the cyclization of squalene into hopene. The polypeptide is Squalene--hopene cyclase (shc) (Zymomonas mobilis subsp. mobilis (strain ATCC 31821 / ZM4 / CP4)).